Consider the following 76-residue polypeptide: Small ribosomal subunit protein bS18 (76 aa).

Belongs to the bacterial ribosomal protein bS18 family. Part of the 30S ribosomal subunit. Forms a tight heterodimer with protein bS6.

Functionally, binds as a heterodimer with protein bS6 to the central domain of the 16S rRNA, where it helps stabilize the platform of the 30S subunit. The protein is Small ribosomal subunit protein bS18 of Azotobacter vinelandii (strain DJ / ATCC BAA-1303).